The primary structure comprises 179 residues: Large ribosomal subunit protein uL6 (179 aa).

This sequence belongs to the universal ribosomal protein uL6 family. In terms of assembly, part of the 50S ribosomal subunit.

Functionally, this protein binds to the 23S rRNA, and is important in its secondary structure. It is located near the subunit interface in the base of the L7/L12 stalk, and near the tRNA binding site of the peptidyltransferase center. The protein is Large ribosomal subunit protein uL6 of Mycobacterium avium (strain 104).